Consider the following 480-residue polypeptide: RAC-alpha serine/threonine-protein kinase (480 aa).

The PH domain maps to 5–108; sequence AIVKEGWLHK…WTTAIQTVAD (104 aa). N6-acetyllysine is present on residues Lys-14 and Lys-20. Position 14 to 19 (14 to 19) interacts with 1D-myo-inositol 1,3,4,5-tetrakisphosphate; the sequence is KRGEYI. 1D-myo-inositol 1,3,4,5-tetrakisphosphate-binding positions include 23–25 and Asn-53; that span reads RPR. Cys-60 and Cys-77 are oxidised to a cystine. Arg-86 contacts 1D-myo-inositol 1,3,4,5-tetrakisphosphate. Residue Ser-124 is modified to Phosphoserine. Ser-129 bears the Phosphoserine; alternate mark. A glycan (O-linked (GlcNAc) serine; alternate) is linked at Ser-129. A Protein kinase domain is found at 150–408; the sequence is FEYLKLLGKG…AKEIMQHRFF (259 aa). 156–164 provides a ligand contact to ATP; sequence LGKGTFGKV. Tyr-176 carries the phosphotyrosine; by TNK2 modification. Lys-179 serves as a coordination point for ATP. Asp-274 functions as the Proton acceptor in the catalytic mechanism. Lys-284 is covalently cross-linked (Glycyl lysine isopeptide (Lys-Gly) (interchain with G-Cter in ubiquitin)). Cysteines 296 and 310 form a disulfide. Residue Thr-305 is glycosylated (O-linked (GlcNAc) threonine). Phosphothreonine; by PDPK1 is present on Thr-308. O-linked (GlcNAc) threonine glycosylation occurs at Thr-312. Residues 409–480 form the AGC-kinase C-terminal domain; it reads ASIVWQDVYE…QFSYSASATA (72 aa). At Thr-448 the chain carries Phosphothreonine. The residue at position 450 (Thr-450) is a Phosphothreonine; by MTOR. A disordered region spans residues 450 to 480; sequence TPPDQDDSMEGVDSERRPHFPQFSYSASATA. A glycan (O-linked (GlcNAc) serine; alternate) is linked at Ser-473. Ser-473 is modified (phosphoserine; by MTOR; alternate). Position 474 is a phosphotyrosine (Tyr-474). Residue Ser-477 is modified to Phosphoserine. At Thr-479 the chain carries Phosphothreonine.

Belongs to the protein kinase superfamily. AGC Ser/Thr protein kinase family. RAC subfamily. As to quaternary structure, interacts (via the C-terminus) with CCDC88A (via its C-terminus) and THEM4 (via its C-terminus). Interacts with AKTIP. Interacts (via PH domain) with MTCP1, TCL1A and TCL1B. Interacts with TRAF6. Interacts with GRB10; the interaction leads to GRB10 phosphorylation thus promoting YWHAE binding. Interacts with RARA; the interaction phosphorylates RARA and represses its transactivation activity. Interacts with MAP3K5 and TNK2. Interacts with BAD, CLK2, PPP2R5B, STK3 and STK4. Interacts (via PH domain) with SIRT1. Interacts with SRPK2 in a phosphorylation-dependent manner. Interacts with RAF1. Interacts with PKN2 (via C-terminal domain); the interaction occurs with the C-terminus cleavage products of PKN2 in apoptotic cells. Interacts with TRIM13; the interaction ubiquitinates AKT1 leading to its proteasomal degradation. Interacts with and phosphorylated by PDPK1. Interacts with BTBD10. Interacts with KCTD20. Interacts with PA2G4. Interacts with PA2G4. Interacts with KIF14; the interaction is detected in the plasma membrane upon INS stimulation and promotes AKT1 phosphorylation. Interacts with FAM83B; activates the PI3K/AKT signaling cascade. Interacts with WDFY2 (via WD repeats 1-3). Forms a complex with WDFY2 and FOXO1. Interacts with FAM168A. Interacts with SYAP1 (via phosphorylated form and BSD domain); this interaction is enhanced in a mTORC2-mediated manner in response to epidermal growth factor (EGF) stimulation and activates AKT1. Interacts with PKHM3. Interacts with FKBP5/FKBP51; promoting interaction between Akt/AKT1 and PHLPP1, thereby enhancing dephosphorylation and subsequent activation of Akt/AKT1. Interacts with TMEM175; leading to formation of the lysoK(GF) complex. O-GlcNAcylation at Thr-305 and Thr-312 inhibits activating phosphorylation at Thr-308 via disrupting the interaction between AKT1 and PDPK1. O-GlcNAcylation at Ser-473 also probably interferes with phosphorylation at this site. In terms of processing, phosphorylation on Thr-308, Ser-473 and Tyr-474 is required for full activity. Phosphorylation of the activation loop at Thr-308 by PDPK1/PDK1 is a prerequisite for full activation. Phosphorylation by mTORC2 in response to growth factors plays a key role in AKT1 activation: mTORC2 phosphorylates different sites depending on the context, such as Thr-450, Ser-473, Ser-477 or Thr-479, thereby facilitating subsequent phosphorylation of the activation loop by PDPK1/PDK1. Phosphorylation at Ser-473 by mTORC2 promotes ubiquitination and degradation by the proteasome. Also phosphorylated at Ser-477 and Thr-479 by CDK2, facilitating subsequent phosphorylation of the activation loop by PDPK1/PDK1. Activated TNK2 phosphorylates it on Tyr-176 resulting in its binding to the anionic plasma membrane phospholipid PA. This phosphorylated form localizes to the cell membrane, where it is targeted by PDPK1 and PDPK2 for further phosphorylations on Thr-308 and Ser-473 leading to its activation. Phosphorylated at Thr-308 and Ser-473 by IKBKE and TBK1. Ser-473 phosphorylation is enhanced by interaction with AGAP2 isoform 2 (PIKE-A). Ser-473 phosphorylation is enhanced by signaling through activated FLT3. Ser-473 is dephosphorylated by PHLPP. Dephosphorylated at Thr-308 and Ser-473 by PP2A phosphatase. The phosphorylated form of PPP2R5B is required for bridging AKT1 with PP2A phosphatase. Ser-473 is dephosphorylated by CPPED1, leading to termination of signaling. AIM2 acts as an inhibitor of AKT1 by inhibiting phosphorylation Ser-473: AIM2 acts both by inhibiting the activity of PRKDC/DNA-PK kinase and promoting dephosphorylation by PP2A phosphatase. Post-translationally, ubiquitinated; undergoes both 'Lys-48'- and 'Lys-63'-linked polyubiquitination. TRAF6-induced 'Lys-63'-linked AKT1 ubiquitination is critical for phosphorylation and activation. When ubiquitinated, it translocates to the plasma membrane, where it becomes phosphorylated. When fully phosphorylated and translocated into the nucleus, undergoes 'Lys-48'-polyubiquitination catalyzed by TTC3, leading to its degradation by the proteasome. Ubiquitinated via 'Lys-48'-linked polyubiquitination by ZNRF1, leading to its degradation by the proteasome. Also ubiquitinated by TRIM13 leading to its proteasomal degradation. Phosphorylated, undergoes 'Lys-48'-linked polyubiquitination preferentially at Lys-284 catalyzed by MUL1, leading to its proteasomal degradation. Acetylated on Lys-14 and Lys-20 by the histone acetyltransferases EP300 and KAT2B. Acetylation results in reduced phosphorylation and inhibition of activity. Deacetylated at Lys-14 and Lys-20 by SIRT1. SIRT1-mediated deacetylation relieves the inhibition. In terms of processing, cleavage by caspase-3/CASP3. Cleaved at the caspase-3 consensus site Asp-462 during apoptosis, resulting in down-regulation of the AKT signaling pathway and decreased cell survival.

The protein resides in the cytoplasm. The protein localises to the nucleus. Its subcellular location is the cell membrane. It localises to the mitochondrion intermembrane space. The catalysed reaction is L-seryl-[protein] + ATP = O-phospho-L-seryl-[protein] + ADP + H(+). It carries out the reaction L-threonyl-[protein] + ATP = O-phospho-L-threonyl-[protein] + ADP + H(+). AKT1 is one of 3 closely related serine/threonine-protein kinases (AKT1, AKT2 and AKT3) called the AKT kinase, and which regulate many processes including metabolism, proliferation, cell survival, growth and angiogenesis. This is mediated through serine and/or threonine phosphorylation of a range of downstream substrates. Over 100 substrate candidates have been reported so far, but for most of them, no isoform specificity has been reported. AKT is responsible of the regulation of glucose uptake by mediating insulin-induced translocation of the SLC2A4/GLUT4 glucose transporter to the cell surface. Phosphorylation of PTPN1 at 'Ser-50' negatively modulates its phosphatase activity preventing dephosphorylation of the insulin receptor and the attenuation of insulin signaling. Phosphorylation of TBC1D4 triggers the binding of this effector to inhibitory 14-3-3 proteins, which is required for insulin-stimulated glucose transport. AKT also regulates the storage of glucose in the form of glycogen by phosphorylating GSK3A at 'Ser-21' and GSK3B at 'Ser-9', resulting in inhibition of its kinase activity. Phosphorylation of GSK3 isoforms by AKT is also thought to be one mechanism by which cell proliferation is driven. AKT also regulates cell survival via the phosphorylation of MAP3K5 (apoptosis signal-related kinase). Phosphorylation of 'Ser-83' decreases MAP3K5 kinase activity stimulated by oxidative stress and thereby prevents apoptosis. AKT mediates insulin-stimulated protein synthesis by phosphorylating TSC2 at 'Ser-939' and 'Thr-1462', thereby activating the mTORC1 signaling pathway, and leading to both phosphorylation of 4E-BP1 and in activation of RPS6KB1. Also regulates the mTORC1 signaling pathway by catalyzing phosphorylation of CASTOR1 and DEPDC5. AKT plays a role as key modulator of the AKT-mTOR signaling pathway controlling the tempo of the process of newborn neurons integration during adult neurogenesis, including correct neuron positioning, dendritic development and synapse formation. Part of a positive feedback loop of mTORC2 signaling by mediating phosphorylation of MAPKAP1/SIN1, promoting mTORC2 activation. AKT is involved in the phosphorylation of members of the FOXO factors (Forkhead family of transcription factors), leading to binding of 14-3-3 proteins and cytoplasmic localization. In particular, FOXO1 is phosphorylated at 'Thr-24', 'Ser-256' and 'Ser-319'. FOXO3 and FOXO4 are phosphorylated on equivalent sites. AKT has an important role in the regulation of NF-kappa-B-dependent gene transcription and positively regulates the activity of CREB1 (cyclic AMP (cAMP)-response element binding protein). The phosphorylation of CREB1 induces the binding of accessory proteins that are necessary for the transcription of pro-survival genes such as BCL2 and MCL1. AKT phosphorylates 'Ser-454' on ATP citrate lyase (ACLY), thereby potentially regulating ACLY activity and fatty acid synthesis. Activates the 3B isoform of cyclic nucleotide phosphodiesterase (PDE3B) via phosphorylation of 'Ser-273', resulting in reduced cyclic AMP levels and inhibition of lipolysis. Phosphorylates PIKFYVE on 'Ser-318', which results in increased PI(3)P-5 activity. The Rho GTPase-activating protein DLC1 is another substrate and its phosphorylation is implicated in the regulation cell proliferation and cell growth. Signals downstream of phosphatidylinositol 3-kinase (PI(3)K) to mediate the effects of various growth factors such as platelet-derived growth factor (PDGF), epidermal growth factor (EGF), insulin and insulin-like growth factor 1 (IGF1). AKT mediates the antiapoptotic effects of IGF1. Essential for the SPATA13-mediated regulation of cell migration and adhesion assembly and disassembly. May be involved in the regulation of the placental development. Phosphorylates STK4/MST1 at 'Thr-120' and 'Thr-387' leading to inhibition of its: kinase activity, nuclear translocation, autophosphorylation and ability to phosphorylate FOXO3. Phosphorylates STK3/MST2 at 'Thr-117' and 'Thr-384' leading to inhibition of its: cleavage, kinase activity, autophosphorylation at Thr-180, binding to RASSF1 and nuclear translocation. Phosphorylates SRPK2 and enhances its kinase activity towards SRSF2 and ACIN1 and promotes its nuclear translocation. Phosphorylates RAF1 at 'Ser-259' and negatively regulates its activity. Phosphorylation of BAD stimulates its pro-apoptotic activity. Phosphorylates KAT6A at 'Thr-369' and this phosphorylation inhibits the interaction of KAT6A with PML and negatively regulates its acetylation activity towards p53/TP53. Phosphorylates palladin (PALLD), modulating cytoskeletal organization and cell motility. Phosphorylates prohibitin (PHB), playing an important role in cell metabolism and proliferation. Phosphorylates CDKN1A, for which phosphorylation at 'Thr-145' induces its release from CDK2 and cytoplasmic relocalization. These recent findings indicate that the AKT1 isoform has a more specific role in cell motility and proliferation. Phosphorylates CLK2 thereby controlling cell survival to ionizing radiation. Phosphorylates PCK1 at 'Ser-90', reducing the binding affinity of PCK1 to oxaloacetate and changing PCK1 into an atypical protein kinase activity using GTP as donor. Also acts as an activator of TMEM175 potassium channel activity in response to growth factors: forms the lysoK(GF) complex together with TMEM175 and acts by promoting TMEM175 channel activation, independently of its protein kinase activity. Acts as a negative regulator of the cGAS-STING pathway by mediating phosphorylation of CGAS during mitosis, leading to its inhibition. Acts as a regulator of mitochondrial calcium uptake by mediating phosphorylation of MICU1 in the mitochondrial intermembrane space, impairing MICU1 maturation. Acts as an inhibitor of tRNA methylation by mediating phosphorylation of the N-terminus of METTL1, thereby inhibiting METTL1 methyltransferase activity. In response to LPAR1 receptor pathway activation, phosphorylates Rabin8/RAB3IP which alters its activity and phosphorylates WDR44 which induces WDR44 binding to Rab11, thereby switching Rab11 vesicular function from preciliary trafficking to endocytic recycling. This is RAC-alpha serine/threonine-protein kinase (AKT1) from Bos taurus (Bovine).